Consider the following 34-residue polypeptide: Photosystem II reaction center protein Psb30 (34 aa).

A helical transmembrane segment spans residues 9 to 29 (QLIATGTIMLAGPAVIVLLAL).

This sequence belongs to the Psb30/Ycf12 family. PSII is composed of 1 copy each of membrane proteins PsbA, PsbB, PsbC, PsbD, PsbE, PsbF, PsbH, PsbI, PsbJ, PsbK, PsbL, PsbM, PsbT, PsbX, PsbY, PsbZ, Psb30/Ycf12, peripheral proteins of the oxygen-evolving complex and a large number of cofactors. It forms dimeric complexes.

The protein localises to the plastid. Its subcellular location is the chloroplast thylakoid membrane. Its function is as follows. A core subunit of photosystem II (PSII), probably helps stabilize the reaction center. The protein is Photosystem II reaction center protein Psb30 of Phaeodactylum tricornutum (strain CCAP 1055/1).